A 33-amino-acid chain; its full sequence is Photosystem II reaction center protein Psb30 (33 aa).

A helical transmembrane segment spans residues 5–25 (VIAQLASLALIIVLGPLVIGL).

The protein belongs to the Psb30/Ycf12 family. As to quaternary structure, PSII is composed of 1 copy each of membrane proteins PsbA, PsbB, PsbC, PsbD, PsbE, PsbF, PsbH, PsbI, PsbJ, PsbK, PsbL, PsbM, PsbT, PsbX, PsbY, PsbZ, Psb30/Ycf12, peripheral proteins of the oxygen-evolving complex and a large number of cofactors. It forms dimeric complexes.

It localises to the plastid. It is found in the chloroplast thylakoid membrane. A core subunit of photosystem II (PSII), probably helps stabilize the reaction center. The sequence is that of Photosystem II reaction center protein Psb30 from Chara vulgaris (Common stonewort).